The sequence spans 306 residues: MEQWESRGHLLTEQINPNSLNLDQLNPLELVDLFNREDAQTLKAIAMARQELALGISLTSQALAKGGRLFYIGAGTSGRLGVLDAAECPPTFCTPPELVQGIIAGGAAALVRSSEDLEDKAEDGAAIIAQREIHELDVVVGITAGGTTPYVHGALQAAKQRGATTIAISCVPAEQVEIAVDVDIRLLTGPELLAGSTRLKAGTVTKMALNILSTGTMVMLGKVYGNQMVDVAVTNHKLHDRALRIICHLTDVSREEAAILLEKSGRRVKLALLMQKTGLSAAAGQELLQKHRGQLRAALQAYNQID.

Residues 59-222 (TSQALAKGGR…STGTMVMLGK (164 aa)) enclose the SIS domain. Glu87 functions as the Proton donor in the catalytic mechanism. The active site involves Glu118.

This sequence belongs to the GCKR-like family. MurNAc-6-P etherase subfamily. As to quaternary structure, homodimer.

It catalyses the reaction N-acetyl-D-muramate 6-phosphate + H2O = N-acetyl-D-glucosamine 6-phosphate + (R)-lactate. Its pathway is amino-sugar metabolism; N-acetylmuramate degradation. Its function is as follows. Specifically catalyzes the cleavage of the D-lactyl ether substituent of MurNAc 6-phosphate, producing GlcNAc 6-phosphate and D-lactate. The polypeptide is N-acetylmuramic acid 6-phosphate etherase (Microcystis aeruginosa (strain NIES-843 / IAM M-2473)).